The sequence spans 351 residues: Histidinol-phosphate aminotransferase 1 (351 aa).

Lysine 210 is modified (N6-(pyridoxal phosphate)lysine).

Belongs to the class-II pyridoxal-phosphate-dependent aminotransferase family. Histidinol-phosphate aminotransferase subfamily. Homodimer. Requires pyridoxal 5'-phosphate as cofactor.

The enzyme catalyses L-histidinol phosphate + 2-oxoglutarate = 3-(imidazol-4-yl)-2-oxopropyl phosphate + L-glutamate. The protein operates within amino-acid biosynthesis; L-histidine biosynthesis; L-histidine from 5-phospho-alpha-D-ribose 1-diphosphate: step 7/9. The protein is Histidinol-phosphate aminotransferase 1 (hisC1) of Pasteurella multocida (strain Pm70).